A 475-amino-acid chain; its full sequence is 3-isopropylmalate dehydratase large subunit (475 aa).

Cys-353, Cys-414, and Cys-417 together coordinate [4Fe-4S] cluster.

This sequence belongs to the aconitase/IPM isomerase family. LeuC type 1 subfamily. In terms of assembly, heterodimer of LeuC and LeuD. The cofactor is [4Fe-4S] cluster.

The enzyme catalyses (2R,3S)-3-isopropylmalate = (2S)-2-isopropylmalate. It functions in the pathway amino-acid biosynthesis; L-leucine biosynthesis; L-leucine from 3-methyl-2-oxobutanoate: step 2/4. Functionally, catalyzes the isomerization between 2-isopropylmalate and 3-isopropylmalate, via the formation of 2-isopropylmaleate. In Ectopseudomonas mendocina (strain ymp) (Pseudomonas mendocina), this protein is 3-isopropylmalate dehydratase large subunit.